Here is a 50-residue protein sequence, read N- to C-terminus: Omwaprin-a (50 aa).

The WAP domain maps to 3–47; the sequence is RPKKPGLCPPRPQKPCVKECKNDDSCPGQQKCCNYGCKDECRDPI. 4 disulfide bridges follow: C10/C35, C18/C39, C22/C34, and C28/C43.

This sequence belongs to the venom waprin family. In terms of tissue distribution, expressed by the venom gland.

It is found in the secreted. Its function is as follows. Damages membranes of susceptible bacteria. Has antibacterial activity against the Gram-positive bacteria B.megaterium and S.warneri. After a 45-minute treatment with this protein, B.megaterium have no visible pili and are smooth. Has no antibacterial activity against the Gram-positive bacteria B.thuringiensis, S.aureus, S.clavuligerus and B.anthracis, or the Gram-negative bacteria E.coli and A.tumefaciens. Has no hemolytic activity. Does not inhibit the proteinases elastase and cathepsin G. Is not toxic to mice. This chain is Omwaprin-a, found in Oxyuranus microlepidotus (Inland taipan).